Here is a 345-residue protein sequence, read N- to C-terminus: Phosphoribosylformylglycinamidine cyclo-ligase (345 aa).

It belongs to the AIR synthase family.

The protein localises to the cytoplasm. The enzyme catalyses 2-formamido-N(1)-(5-O-phospho-beta-D-ribosyl)acetamidine + ATP = 5-amino-1-(5-phospho-beta-D-ribosyl)imidazole + ADP + phosphate + H(+). It participates in purine metabolism; IMP biosynthesis via de novo pathway; 5-amino-1-(5-phospho-D-ribosyl)imidazole from N(2)-formyl-N(1)-(5-phospho-D-ribosyl)glycinamide: step 2/2. The polypeptide is Phosphoribosylformylglycinamidine cyclo-ligase (Mannheimia succiniciproducens (strain KCTC 0769BP / MBEL55E)).